Here is a 201-residue protein sequence, read N- to C-terminus: Large ribosomal subunit protein bL25 (201 aa).

The protein belongs to the bacterial ribosomal protein bL25 family. CTC subfamily. Part of the 50S ribosomal subunit; part of the 5S rRNA/L5/L18/L25 subcomplex. Contacts the 5S rRNA. Binds to the 5S rRNA independently of L5 and L18.

In terms of biological role, this is one of the proteins that binds to the 5S RNA in the ribosome where it forms part of the central protuberance. The chain is Large ribosomal subunit protein bL25 from Burkholderia vietnamiensis (strain G4 / LMG 22486) (Burkholderia cepacia (strain R1808)).